Reading from the N-terminus, the 272-residue chain is MKRTAFFISDGTGITAETLGQSLLAQFDSIPFNKFTRPYIDTPDKARTMVQQINAAAERDGMRPIIFDTIVNQDIREILATSNGFMIDIFSTFLSPLEQELTAHSSYSVGKSHSIGGNSNYMERIEAVNFALDNDDGARTHYYDKADLILVGVSRCGKTPTCLYMAMQFGIRAANYPLTEDDMERLQLPAVLKKHHNKLFGLTIDPDRLTAIRHERKPNSRYSSFAQCEFEVREVESLFRRENIPNINSTHFSVEEISAKILVEKGVERRFK.

Residue 152-159 coordinates ADP; it reads GVSRCGKT.

The protein belongs to the pyruvate, phosphate/water dikinase regulatory protein family. PSRP subfamily.

The enzyme catalyses [pyruvate, water dikinase] + ADP = [pyruvate, water dikinase]-phosphate + AMP + H(+). The catalysed reaction is [pyruvate, water dikinase]-phosphate + phosphate + H(+) = [pyruvate, water dikinase] + diphosphate. Its function is as follows. Bifunctional serine/threonine kinase and phosphorylase involved in the regulation of the phosphoenolpyruvate synthase (PEPS) by catalyzing its phosphorylation/dephosphorylation. The protein is Putative phosphoenolpyruvate synthase regulatory protein of Pseudomonas putida (strain W619).